The primary structure comprises 106 residues: uncharacterized protein (106 aa).

The first 22 residues, 1–22 (MKKHPNLLLGFSVYLSAGTKLT), serve as a signal peptide directing secretion. Positions 23–46 (IPPEAEQHTAPSDNNKRKRAKCDD) are disordered.

This is an uncharacterized protein from Arabidopsis thaliana (Mouse-ear cress).